Here is a 135-residue protein sequence, read N- to C-terminus: Lymphocyte antigen 6B (135 aa).

Positions 1-26 (MNRSCAMKSCVLILLLALLCAERAQG) are cleaved as a signal peptide. The UPAR/Ly6 domain occupies 27 to 119 (LNCYNCTMIP…PTGGSTWTMA (93 aa)). 5 disulfides stabilise this stretch: Cys29–Cys54, Cys32–Cys41, Cys47–Cys75, Cys79–Cys99, and Cys100–Cys105. Gly113 is lipidated: GPI-anchor amidated glycine. Residues 114-135 (STWTMAGVLLFILGSVLLQTLL) constitute a propeptide, removed in mature form.

It is found in the cell membrane. This chain is Lymphocyte antigen 6B (Ly6b), found in Rattus norvegicus (Rat).